The following is a 298-amino-acid chain: D-alanine--D-alanine ligase (298 aa).

An ATP-grasp domain is found at 97-290; that stretch reads FYSLFKNYIQ…FDELINIIIK (194 aa). 124–173 is a binding site for ATP; the sequence is PFIIKPRKSGSSKGVYIIHNENEYKFYLEKDLKEFQEVLVQEYIKGREIT. Positions 245, 257, and 259 each coordinate Mg(2+).

Belongs to the D-alanine--D-alanine ligase family. Mg(2+) serves as cofactor. The cofactor is Mn(2+).

The protein resides in the cytoplasm. The catalysed reaction is 2 D-alanine + ATP = D-alanyl-D-alanine + ADP + phosphate + H(+). Its pathway is cell wall biogenesis; peptidoglycan biosynthesis. Its function is as follows. Cell wall formation. The sequence is that of D-alanine--D-alanine ligase from Petrotoga mobilis (strain DSM 10674 / SJ95).